Consider the following 76-residue polypeptide: UPF0291 protein BCE_1981 (76 aa).

It belongs to the UPF0291 family.

It localises to the cytoplasm. This Bacillus cereus (strain ATCC 10987 / NRS 248) protein is UPF0291 protein BCE_1981.